The following is a 210-amino-acid chain: Putative 4-hydroxy-4-methyl-2-oxoglutarate aldolase (210 aa).

Substrate is bound by residues 87–90 (GDFV) and arginine 109. Residue aspartate 110 coordinates a divalent metal cation.

It belongs to the class II aldolase/RraA-like family. Homotrimer. Requires a divalent metal cation as cofactor.

The enzyme catalyses 4-hydroxy-4-methyl-2-oxoglutarate = 2 pyruvate. It carries out the reaction oxaloacetate + H(+) = pyruvate + CO2. Functionally, catalyzes the aldol cleavage of 4-hydroxy-4-methyl-2-oxoglutarate (HMG) into 2 molecules of pyruvate. Also contains a secondary oxaloacetate (OAA) decarboxylase activity due to the common pyruvate enolate transition state formed following C-C bond cleavage in the retro-aldol and decarboxylation reactions. The sequence is that of Putative 4-hydroxy-4-methyl-2-oxoglutarate aldolase from Halalkalibacterium halodurans (strain ATCC BAA-125 / DSM 18197 / FERM 7344 / JCM 9153 / C-125) (Bacillus halodurans).